A 523-amino-acid polypeptide reads, in one-letter code: Putative pentatricopeptide repeat-containing protein At3g15200 (523 aa).

PPR repeat units follow at residues 142–172 (SSMLYNEILDVLGKMRRFEEFHQVFDEMSKR), 177–211 (NEKTYEVLLNRYAAAHKVDEAVGVFERRKEFGIDD), 212–242 (DLVAFHGLLMWLCRYKHVEFAETLFCSRRRE), 246–280 (DIKAMNMILNGWCVLGNVHEAKRFWKDIIASKCRP), 281–315 (DVVSYGTMINALTKKGKLGKAMELYRAMWDTRRNP), 316–350 (DVKICNNVIDALCFKKRIPEALEVFREISEKGPDP), 351–385 (NVVTYNSLLKHLCKIRRTEKVWELVEEMELKGGSC), 388–418 (NDVTFSYLLKYSQRSKDVDIVLERMAKNKCE), 420–454 (TSDLYNLMFRLYVQWDKEEKVREIWSEMERSGLGP), and 455–489 (DQRTYTIRIHGLHTKGKIGEALSYFQEMMSKGMVP). The tract at residues 497–523 (LNQNKTKPRVEDKMLRSNLTSEESESD) is disordered.

This sequence belongs to the PPR family. P subfamily.

The protein is Putative pentatricopeptide repeat-containing protein At3g15200 of Arabidopsis thaliana (Mouse-ear cress).